The chain runs to 131 residues: DNA-binding protein inhibitor ID-4 (131 aa).

The bHLH domain occupies 36 to 88 (ARYKMEEEETLCLQYDMNDCYSRLKRLVPTIPPNKKVSKVEILQHVIDYILDL).

As to quaternary structure, heterodimer with other HLH proteins. In terms of tissue distribution, during embryonic development, expressed in a number of neural tissues, including Rohon-Beard neurons, olfactory placode, eye primordia, and the trigeminal ganglia. Also expressed in other organs including the pronephros and liver primordium. Pronephric development begins by stage 25 and increases during tailbud stages. Expressed in both the tubules and the duct. As embryogenesis progresses, expressed in the migrating melanocytes and lateral line structures.

Its subcellular location is the nucleus. Transcriptional regulator (lacking a basic DNA binding domain) which negatively regulates the basic helix-loop-helix (bHLH) transcription factors by forming heterodimers and inhibiting their DNA binding and transcriptional activity. Inhibits the activity of both neurogenic (neurog1/neurogenin, neurod1/neuroD) and myogenic (myod1/myoD) bHLH factors. This Xenopus laevis (African clawed frog) protein is DNA-binding protein inhibitor ID-4.